The sequence spans 463 residues: Quinolone resistance protein NorB (463 aa).

Transmembrane regions (helical) follow at residues 17–37 (IGIV…VNVV), 53–73 (IAVS…GGLA), 86–106 (IILN…LLLI), 107–127 (IGRL…LSII), 142–162 (YWSI…GAVA), 165–185 (LGWR…LFLI), 201–221 (FDIK…ILIT), 230–250 (SLLF…FIVL), 273–293 (TASN…NTFV), 299–319 (YSSL…LIMI), 334–354 (PMLI…LTFL), 357–377 (IFYV…LGIY), 403–423 (MASA…YAIV), and 435–455 (IALW…LLLV).

It belongs to the major facilitator superfamily. TCR/Tet family.

The protein localises to the cell membrane. Functionally, multidrug efflux pump that acts independently of NorA and is one of the factors that confers resistance against diverse quinolones and chemical compounds. This chain is Quinolone resistance protein NorB (norB), found in Staphylococcus aureus (strain COL).